Here is a 297-residue protein sequence, read N- to C-terminus: Formylmethanofuran--tetrahydromethanopterin formyltransferase (297 aa).

This sequence belongs to the FTR family. As to quaternary structure, homotetramer.

The protein resides in the cytoplasm. It carries out the reaction N-formylmethanofuran + 5,6,7,8-tetrahydromethanopterin + H(+) = N(5)-formyl-5,6,7,8-tetrahydromethanopterin + methanofuran. It functions in the pathway one-carbon metabolism; methanogenesis from CO(2); 5,10-methenyl-5,6,7,8-tetrahydromethanopterin from CO(2): step 2/3. Its function is as follows. Catalyzes the reversible transfer of a formyl group from formylmethanofuran (formyl-MFR) to tetrahydromethanopterin (H(4)MPT) to produce 5-formyl tetrahydromethanopterin (5-formyl-H(4)MPT) and methanofuran (MFR). The chain is Formylmethanofuran--tetrahydromethanopterin formyltransferase from Methanosarcina mazei (strain ATCC BAA-159 / DSM 3647 / Goe1 / Go1 / JCM 11833 / OCM 88) (Methanosarcina frisia).